Consider the following 309-residue polypeptide: Cytochrome c biogenesis protein CcsA (309 aa).

The next 8 helical transmembrane spans lie at 18–38, 43–63, 73–93, 102–122, 148–168, 216–236, 250–267, and 279–299; these read LGLL…GAVF, SFAV…QLLF, ISNL…GQLL, IIPS…CFVL, VMLS…VLFI, SILI…VWAN, TWAF…HMRI, and LAST…FLGI.

The protein belongs to the CcmF/CycK/Ccl1/NrfE/CcsA family. As to quaternary structure, may interact with ccs1.

The protein localises to the cellular thylakoid membrane. Functionally, required during biogenesis of c-type cytochromes (cytochrome c6 and cytochrome f) at the step of heme attachment. This is Cytochrome c biogenesis protein CcsA from Prochlorococcus marinus (strain MIT 9301).